Reading from the N-terminus, the 435-residue chain is tRNA(Ile)-lysidine synthase (435 aa).

Residue 23–28 (SGGMDS) participates in ATP binding.

The protein belongs to the tRNA(Ile)-lysidine synthase family.

Its subcellular location is the cytoplasm. It catalyses the reaction cytidine(34) in tRNA(Ile2) + L-lysine + ATP = lysidine(34) in tRNA(Ile2) + AMP + diphosphate + H(+). Ligates lysine onto the cytidine present at position 34 of the AUA codon-specific tRNA(Ile) that contains the anticodon CAU, in an ATP-dependent manner. Cytidine is converted to lysidine, thus changing the amino acid specificity of the tRNA from methionine to isoleucine. In Xanthomonas campestris pv. campestris (strain 8004), this protein is tRNA(Ile)-lysidine synthase.